The sequence spans 429 residues: Adenylosuccinate synthetase (429 aa).

GTP contacts are provided by residues 13-19 and 41-43; these read GDEGKGK and GHT. Catalysis depends on D14, which acts as the Proton acceptor. The Mg(2+) site is built by D14 and G41. Residues 14-17, 39-42, T130, R144, Q225, T240, and R304 each bind IMP; these read DEGK and NAGH. The active-site Proton donor is the H42. 300–306 is a substrate binding site; that stretch reads ATTGRAR. GTP contacts are provided by residues R306, 332-334, and 413-415; these read KLD and STG.

The protein belongs to the adenylosuccinate synthetase family. Homodimer. Requires Mg(2+) as cofactor.

It is found in the cytoplasm. The catalysed reaction is IMP + L-aspartate + GTP = N(6)-(1,2-dicarboxyethyl)-AMP + GDP + phosphate + 2 H(+). It functions in the pathway purine metabolism; AMP biosynthesis via de novo pathway; AMP from IMP: step 1/2. Plays an important role in the de novo pathway of purine nucleotide biosynthesis. Catalyzes the first committed step in the biosynthesis of AMP from IMP. This Pseudomonas fluorescens (strain SBW25) protein is Adenylosuccinate synthetase.